A 649-amino-acid chain; its full sequence is Forkhead box protein O1 (649 aa).

Disordered regions lie at residues 1-62 (MAEA…ASAS) and 112-151 (VHSA…SSRR). A Phosphothreonine; by PKB/AKT1 or PKB/AKT2 and SGK1 modification is found at threonine 24. The segment covering 33 to 62 (NQSNSTTSSPAPSGSTAANPDATASLASAS) has biased composition (low complexity). Positions 116 to 135 (PPQPPPTGPLSQPPPVPPAA) are enriched in pro residues. Residues 154 to 248 (WGNLSYADLI…KSGKSPRRRA (95 aa)) constitute a DNA-binding region (fork-head). DNA-binding regions lie at residues 205–212 (NSIRHNLS) and 228–231 (SSWW). Serine 206 carries the post-translational modification Phosphoserine; by STK4/MST1. A phosphoserine mark is found at serine 212, serine 228, and serine 229. Residues 228-339 (SSWWMLNPEG…DDLGDGDVHS (112 aa)) form a disordered region. Residues lysine 239 and lysine 242 each carry the N6-acetyllysine modification. Serine 243 is modified (phosphoserine; by CDK1). Omega-N-methylarginine; by PRMT1 is present on residues arginine 245 and arginine 247. The short motif at 245–247 (RRR) is the Nuclear localization signal element. Position 250 is a phosphoserine; by PKB/AKT1 and SGK1 (serine 250). An N6-acetyllysine mark is found at lysine 256, lysine 259, and lysine 268. The segment covering 258-269 (AKSRGRAAKKKA) has biased composition (basic residues). Residues 277-557 (GPGDSPGSQF…RLTPVKTPLQ (281 aa)) form a sufficient for interaction with NLK region. Phosphoserine occurs at positions 281 and 292. Residues 303–320 (NWSTFRPRTSSNASTISG) are compositionally biased toward polar residues. Serine 313 carries the post-translational modification Phosphoserine; by PKB/AKT1. Phosphoserine; by CK1 and SGK1 is present on serine 316. Serine 319 carries the post-translational modification Phosphoserine; by CK1. Serine 323 carries the phosphoserine modification. Phosphothreonine is present on threonine 327. Positions 357–453 (SEISNPENME…GGLNQYNCAP (97 aa)) are required for interaction with RUNX2. N6-acetyllysine is present on lysine 417. Positions 456-460 (LKELL) match the Required for interaction with SIRT1 motif.

Interacts with LRPPRC. Interacts with RUNX2; the interaction inhibits RUNX2 transcriptional activity and mediates the IGF1/insulin-dependent BGLAP expression in osteoblasts Interacts with PPP2R1A; the interaction regulates the dephosphorylation of FOXO1 at Thr-24 and Ser-250 leading to its nuclear import. Interacts with NLK. Interacts with SIRT1; the interaction results in the deacetylation of FOXO1 leading to activation of FOXO1-mediated transcription of genes involved in DNA repair and stress resistance. Binds to CDK1. Interacts with the 14-3-3 proteins, YWHAG and YWHAZ; the interactions require insulin-stimulated phosphorylation on Thr-24, promote nuclear exit and loss of transcriptional activity. Interacts with SKP2; the interaction ubiquitinates FOXO1 leading to its proteasomal degradation. The interaction requires the presence of KRIT1. Interacts (via the C-terminal half) with ATF4 (via its DNA binding domain); the interaction occurs in osteoblasts, regulates glucose homeostasis via suppression of beta-cell proliferation and subsequent decrease in insulin production. Interacts with PRMT1; the interaction methylates FOXO1, prevents PKB/AKT1 phosphorylation and retains FOXO1 in the nucleus. Interacts with EP300 and CREBBP; the interactions acetylate FOXO1. Interacts with SIRT2; the interaction is disrupted in response to oxidative stress or serum deprivation, leading to increased level of acetylated FOXO1, which promotes stress-induced autophagy by stimulating E1-like activating enzyme ATG7. Interacts (acetylated form) with ATG7; the interaction is increased in response to oxidative stress or serum deprivation and promotes the autophagic process leading to cell death. Interacts (acetylated form) with PPARG. Interacts with XBP1; this interaction is direct and leads to FOXO1 ubiquitination and degradation via the proteasome pathway. Interacts (via the Fork-head domain) with CEBPA; the interaction increases when FOXO1 is deacetylated. Interacts with WDFY2. Forms a complex with WDFY2 and AKT1. Interacts with CRY1. Interacts with PPIA/CYPA; the interaction promotes FOXO1 dephosphorylation, nuclear accumulation and transcriptional activity. Interacts with TOX4; FOXO1 is required for full induction of TOX4-dependent activity and the interaction is inhibited by insulin. Interacts (when phosphorylated on Ser-250) with STUB1/CHIP. In terms of processing, phosphorylation by NLK promotes nuclear export and inhibits the transcriptional activity. In response to growth factors, phosphorylation on Thr-24, Ser-250 and Ser-313 by PKB/AKT1 promotes nuclear export and inactivation of transactivational activity. Phosphorylation on Thr-24 is required for binding 14-3-3 proteins. Phosphorylation of Ser-250 decreases DNA-binding activity and promotes the phosphorylation of Thr-24 and Ser-313, permitting phosphorylation of Ser-316 and Ser-319, probably by CDK1, leading to nuclear exclusion and loss of function. Stress signals, such as response to oxygen or nitric oxide, attenuate the PKB/AKT1-mediated phosphorylation leading to nuclear retention. Phosphorylation of Ser-323 is independent of IGF1 and leads to reduced function. Dephosphorylated on Thr-24 and Ser-250 by PP2A in beta-cells under oxidative stress leading to nuclear retention. Phosphorylation of Ser-243 by CDK1 disrupts binding of 14-3-3 proteins leading to nuclear accumulation and has no effect on DNA binding nor transcriptional activity. Phosphorylation by STK4/MST1 on Ser-206, upon oxidative stress, inhibits binding to 14-3-3 proteins and nuclear export. PPIA/CYPA promotes its dephosphorylation on Ser-250. Ubiquitinated by SKP2. Ubiquitination leads to proteasomal degradation. Ubiquitinated by STUB1/CHIP; when Ser-250 is phosphorylated. Post-translationally, methylation inhibits AKT1-mediated phosphorylation at Ser-250 and is increased by oxidative stress. In terms of processing, acetylated. Acetylation at Lys-256 and Lys-268 are necessary for autophagic cell death induction. Deacetylated by SIRT2 in response to oxidative stress or serum deprivation, thereby negatively regulating FOXO1-mediated autophagic cell death. Once in the nucleus, acetylated by CREBBP/EP300. Acetylation diminishes the interaction with target DNA and attenuates the transcriptional activity. It increases the phosphorylation at Ser-250. Deacetylation by SIRT1 results in reactivation of the transcriptional activity. Oxidative stress by hydrogen peroxide treatment appears to promote deacetylation and uncoupling of insulin-induced phosphorylation. By contrast, resveratrol acts independently of acetylation. Acetylated at Lys-417, promoting its localization to the nucleus and transcription factor activity. Deacetylation at Lys-417 by SIRT6, promotes its translocation into the cytoplasm, preventing its transcription factor activity. Deacetylation and subsequent inhibition by SIRT6 has different effects depending on cell types: it inhibits gluconeogenesis in hepatocytes, promotes glucose sensing in pancreatic beta-cells and regulates lipid catabolism in brown adipocytes. As to expression, expressed in the internal elastic lamina of the carotid artery (at protein level).

The protein localises to the cytoplasm. The protein resides in the nucleus. Transcription factor that is the main target of insulin signaling and regulates metabolic homeostasis in response to oxidative stress. Binds to the insulin response element (IRE) with consensus sequence 5'-TT[G/A]TTTTG-3' and the related Daf-16 family binding element (DBE) with consensus sequence 5'-TT[G/A]TTTAC-3'. Activity suppressed by insulin. Main regulator of redox balance and osteoblast numbers and controls bone mass. Orchestrates the endocrine function of the skeleton in regulating glucose metabolism. Also acts as a key regulator of chondrogenic commitment of skeletal progenitor cells in response to lipid availability: when lipids levels are low, translocates to the nucleus and promotes expression of SOX9, which induces chondrogenic commitment and suppresses fatty acid oxidation. Acts synergistically with ATF4 to suppress osteocalcin/BGLAP activity, increasing glucose levels and triggering glucose intolerance and insulin insensitivity. Also suppresses the transcriptional activity of RUNX2, an upstream activator of osteocalcin/BGLAP. Acts as an inhibitor of glucose sensing in pancreatic beta cells by acting as a transcription repressor and suppressing expression of PDX1. In hepatocytes, promotes gluconeogenesis by acting together with PPARGC1A and CEBPA to activate the expression of genes such as IGFBP1, G6PC1 and PCK1. Also promotes gluconeogenesis by directly promoting expression of PPARGC1A and G6PC1. Important regulator of cell death acting downstream of CDK1, PKB/AKT1 and STK4/MST1. Promotes neural cell death. Mediates insulin action on adipose tissue. Regulates the expression of adipogenic genes such as PPARG during preadipocyte differentiation and, adipocyte size and adipose tissue-specific gene expression in response to excessive calorie intake. Regulates the transcriptional activity of GADD45A and repair of nitric oxide-damaged DNA in beta-cells. Required for the autophagic cell death induction in response to starvation or oxidative stress in a transcription-independent manner. Mediates the function of MLIP in cardiomyocytes hypertrophy and cardiac remodeling. Positive regulator of apoptosis in cardiac smooth muscle cells as a result of its transcriptional activation of pro-apoptotic genes. Regulates endothelial cell (EC) viability and apoptosis in a PPIA/CYPA-dependent manner via transcription of CCL2 and BCL2L11 which are involved in EC chemotaxis and apoptosis. This is Forkhead box protein O1 (Foxo1) from Rattus norvegicus (Rat).